A 461-amino-acid chain; its full sequence is D-phenylhydantoinase (461 aa).

A divalent metal cation is bound by residues H59, H61, and K151. K151 is modified (N6-carboxylysine). Residue Y156 participates in substrate binding. 2 residues coordinate a divalent metal cation: H182 and H239. S286 is a substrate binding site. Residue D313 participates in a divalent metal cation binding. N335 is a binding site for substrate.

This sequence belongs to the metallo-dependent hydrolases superfamily. Hydantoinase/dihydropyrimidinase family. Homotetramer. It depends on a divalent metal cation as a cofactor. Carboxylation allows a single lysine to coordinate two divalent metal cations.

The catalysed reaction is D-5-phenylhydantoin + H2O = N-carbamoyl-D-phenylglycine + H(+). Its function is as follows. Catalyzes the stereospecific hydrolysis of the cyclic amide bond of D-hydantoin derivatives with an aromatic side chains at the 5'-position. Has no activity on dihydropyrimidines. The physiological function is unknown. This is D-phenylhydantoinase from Escherichia coli O9:H4 (strain HS).